We begin with the raw amino-acid sequence, 452 residues long: Protein bfr2 (452 aa).

Composition is skewed to basic and acidic residues over residues 1-10 (MGKVSLKDEL) and 19-34 (QERD…SDRE). Residues 1–141 (MGKVSLKDEL…SAIPEKDMDR (141 aa)) are disordered. A phosphoserine mark is found at Ser-31, Ser-36, and Ser-37. Over residues 43 to 57 (TLGREHYVDVSESKL) the composition is skewed to basic and acidic residues. Low complexity predominate over residues 78–92 (ELLNSGSLNSQSSSP). Residues 93-106 (SEEEDSEEDENDAV) are compositionally biased toward acidic residues.

It belongs to the AATF family.

It localises to the nucleus. The protein resides in the nucleolus. This chain is Protein bfr2 (bfr2), found in Schizosaccharomyces pombe (strain 972 / ATCC 24843) (Fission yeast).